The chain runs to 564 residues: Arginine--tRNA ligase (564 aa).

Residues 136 to 146 carry the 'HIGH' region motif; that stretch reads ANPTGPLHMGN.

It belongs to the class-I aminoacyl-tRNA synthetase family. Monomer.

It localises to the cytoplasm. The enzyme catalyses tRNA(Arg) + L-arginine + ATP = L-arginyl-tRNA(Arg) + AMP + diphosphate. The sequence is that of Arginine--tRNA ligase from Ruminiclostridium cellulolyticum (strain ATCC 35319 / DSM 5812 / JCM 6584 / H10) (Clostridium cellulolyticum).